A 172-amino-acid chain; its full sequence is MTCYKLSRRRDLFAFPYPLTVWRDPPRSVEVVRDFVESYDIRHIYTVGDVVTRNFLEYGLAPTSVAVDEKTRRGIKVEGLGLYKRVIRVNNPPGYITEEAWAAVEEAVEGGVLIKVDGEEDMLSLAFIKLAPPRSVVAYGHYLGALVAIPVDWYRDSILRLFNYLEQCQQKA.

GTP-binding residues include aspartate 49, valine 50, valine 51, aspartate 68, lysine 70, and glutamate 120.

Belongs to the GTP-dependent DPCK family.

It carries out the reaction 3'-dephospho-CoA + GTP = GDP + CoA + H(+). The protein operates within cofactor biosynthesis; coenzyme A biosynthesis. Its function is as follows. Catalyzes the GTP-dependent phosphorylation of the 3'-hydroxyl group of dephosphocoenzyme A to form coenzyme A (CoA). The protein is GTP-dependent dephospho-CoA kinase of Pyrobaculum arsenaticum (strain DSM 13514 / JCM 11321 / PZ6).